A 318-amino-acid polypeptide reads, in one-letter code: uncharacterized protein (318 aa).

This is an uncharacterized protein from Orgyia pseudotsugata multicapsid polyhedrosis virus (OpMNPV).